A 447-amino-acid chain; its full sequence is Phosphoglucosamine mutase (447 aa).

The Phosphoserine intermediate role is filled by S108. Residues S108, D247, D249, and D251 each coordinate Mg(2+). Position 108 is a phosphoserine (S108).

It belongs to the phosphohexose mutase family. The cofactor is Mg(2+). Post-translationally, activated by phosphorylation.

It carries out the reaction alpha-D-glucosamine 1-phosphate = D-glucosamine 6-phosphate. Catalyzes the conversion of glucosamine-6-phosphate to glucosamine-1-phosphate. This Bordetella avium (strain 197N) protein is Phosphoglucosamine mutase.